The chain runs to 562 residues: BOS complex subunit NCLN (562 aa).

The first 41 residues, 1–41 (MLEEAGEVLESVLKASCLPLSFLLFVPAVLLLLGPPPAAEA), serve as a signal peptide directing secretion. Residues 42-521 (AHESTVYRMQ…VMNAYRVKPA (480 aa)) are Extracellular-facing. Asparagine 240 carries N-linked (GlcNAc...) asparagine glycosylation. Residues 420 to 447 (GFDEGHLQPNREGSTCRSADLHGSDADP) form a disordered region. Residues 522-542 (IFDLLLAVCIAAYLGVAYVAV) form a helical membrane-spanning segment. Residues 543-562 (QNFGLLYRMIQRLSLKTKQQ) are Cytoplasmic-facing.

The protein belongs to the nicastrin family. As to quaternary structure, component of the multi-pass translocon (MPT) complex.

It localises to the endoplasmic reticulum membrane. In terms of biological role, component of the multi-pass translocon (MPT) complex that mediates insertion of multi-pass membrane proteins into the lipid bilayer of membranes. The MPT complex takes over after the SEC61 complex: following membrane insertion of the first few transmembrane segments of proteins by the SEC61 complex, the MPT complex occludes the lateral gate of the SEC61 complex to promote insertion of subsequent transmembrane regions. May antagonize Nodal signaling and subsequent organization of axial structures during mesodermal patterning, via its interaction with NOMO. The protein is BOS complex subunit NCLN (NCLN) of Gallus gallus (Chicken).